A 144-amino-acid chain; its full sequence is Large ribosomal subunit protein uL15 (144 aa).

The segment at 1-53 is disordered; sequence MFLNTIKPGEGAKHAKRRVGRGIGSGLGKTAGRGHKGQKSRSGGFHKVGFEGG. The span at 21–31 shows a compositional bias: gly residues; that stretch reads RGIGSGLGKTA.

It belongs to the universal ribosomal protein uL15 family. As to quaternary structure, part of the 50S ribosomal subunit.

Its function is as follows. Binds to the 23S rRNA. The sequence is that of Large ribosomal subunit protein uL15 from Laribacter hongkongensis (strain HLHK9).